The chain runs to 172 residues: Bifunctional protein PyrR (172 aa).

Residues 90 to 102 (LVLVDDVLMSGRT) carry the PRPP-binding motif.

This sequence belongs to the purine/pyrimidine phosphoribosyltransferase family. PyrR subfamily.

It catalyses the reaction UMP + diphosphate = 5-phospho-alpha-D-ribose 1-diphosphate + uracil. Its function is as follows. Regulates the transcription of the pyrimidine nucleotide (pyr) operon in response to exogenous pyrimidines. Functionally, also displays a weak uracil phosphoribosyltransferase activity which is not physiologically significant. The polypeptide is Bifunctional protein PyrR (Pseudomonas putida (strain GB-1)).